The primary structure comprises 67 residues: Large ribosomal subunit protein bL35 (67 aa).

Belongs to the bacterial ribosomal protein bL35 family.

This chain is Large ribosomal subunit protein bL35, found in Caldanaerobacter subterraneus subsp. tengcongensis (strain DSM 15242 / JCM 11007 / NBRC 100824 / MB4) (Thermoanaerobacter tengcongensis).